The following is a 207-amino-acid chain: Ribosomal RNA small subunit methyltransferase G (207 aa).

Residues Gly-74, Leu-79, 125-126 (VE), and Arg-140 contribute to the S-adenosyl-L-methionine site.

Belongs to the methyltransferase superfamily. RNA methyltransferase RsmG family.

It localises to the cytoplasm. The catalysed reaction is guanosine(527) in 16S rRNA + S-adenosyl-L-methionine = N(7)-methylguanosine(527) in 16S rRNA + S-adenosyl-L-homocysteine. Specifically methylates the N7 position of guanine in position 527 of 16S rRNA. The polypeptide is Ribosomal RNA small subunit methyltransferase G (Shewanella loihica (strain ATCC BAA-1088 / PV-4)).